Consider the following 175-residue polypeptide: Ribosome-binding factor A (175 aa).

Positions 131 to 175 (KPAGEADPYRDRGSVDEPSDAGGLVIRTSDGLEAENTGDDYQAED) are disordered. Positions 162 to 175 (LEAENTGDDYQAED) are enriched in acidic residues.

This sequence belongs to the RbfA family. As to quaternary structure, monomer. Binds 30S ribosomal subunits, but not 50S ribosomal subunits or 70S ribosomes.

It localises to the cytoplasm. In terms of biological role, one of several proteins that assist in the late maturation steps of the functional core of the 30S ribosomal subunit. Associates with free 30S ribosomal subunits (but not with 30S subunits that are part of 70S ribosomes or polysomes). Required for efficient processing of 16S rRNA. May interact with the 5'-terminal helix region of 16S rRNA. This Mycobacterium ulcerans (strain Agy99) protein is Ribosome-binding factor A.